A 159-amino-acid polypeptide reads, in one-letter code: Cyclic pyranopterin monophosphate synthase (159 aa).

Residues 76-78 and 114-115 each bind substrate; these read LCH and ME. The active site involves Asp129.

Belongs to the MoaC family. In terms of assembly, homohexamer; trimer of dimers.

It catalyses the reaction (8S)-3',8-cyclo-7,8-dihydroguanosine 5'-triphosphate = cyclic pyranopterin phosphate + diphosphate. Its pathway is cofactor biosynthesis; molybdopterin biosynthesis. Catalyzes the conversion of (8S)-3',8-cyclo-7,8-dihydroguanosine 5'-triphosphate to cyclic pyranopterin monophosphate (cPMP). In Shewanella oneidensis (strain ATCC 700550 / JCM 31522 / CIP 106686 / LMG 19005 / NCIMB 14063 / MR-1), this protein is Cyclic pyranopterin monophosphate synthase.